The primary structure comprises 323 residues: tRNA U34 carboxymethyltransferase (323 aa).

Residues Lys91, Trp105, Lys110, Gly130, 152 to 154 (DPS), 181 to 182 (IE), Met196, Tyr200, and Arg315 contribute to the carboxy-S-adenosyl-L-methionine site.

It belongs to the class I-like SAM-binding methyltransferase superfamily. CmoB family. Homotetramer.

The catalysed reaction is carboxy-S-adenosyl-L-methionine + 5-hydroxyuridine(34) in tRNA = 5-carboxymethoxyuridine(34) in tRNA + S-adenosyl-L-homocysteine + H(+). Functionally, catalyzes carboxymethyl transfer from carboxy-S-adenosyl-L-methionine (Cx-SAM) to 5-hydroxyuridine (ho5U) to form 5-carboxymethoxyuridine (cmo5U) at position 34 in tRNAs. The sequence is that of tRNA U34 carboxymethyltransferase from Vibrio atlanticus (strain LGP32) (Vibrio splendidus (strain Mel32)).